The sequence spans 261 residues: Ribosomal RNA small subunit methyltransferase J (261 aa).

S-adenosyl-L-methionine is bound by residues 109-110 (RD), 125-126 (ER), and Asp-179.

The protein belongs to the methyltransferase superfamily. RsmJ family.

The protein localises to the cytoplasm. The enzyme catalyses guanosine(1516) in 16S rRNA + S-adenosyl-L-methionine = N(2)-methylguanosine(1516) in 16S rRNA + S-adenosyl-L-homocysteine + H(+). In terms of biological role, specifically methylates the guanosine in position 1516 of 16S rRNA. The chain is Ribosomal RNA small subunit methyltransferase J from Pseudomonas aeruginosa (strain UCBPP-PA14).